We begin with the raw amino-acid sequence, 339 residues long: MNYSIRLFKIMGIPIELHITFILFLVVIIGLSIMNNSIFWAVLFILLFVSVVLHELGHSYVAKKYGVKIEKILLLPIGGVAMMDKIPKEGELRIGIAGPLVSFIIGIVLLIVSQFFDININGYPLLYTLSLLNLMLGGFNLIPAFPMDGGRILRAILSKKYGYLKSTKIAANIGKSLALIMLLFGLLSMNIILILVSLFVYFGAEQESRVVEVETIFKNIKAKDIMTPNPVYVTPDMSIEEFLDFMLKHKYFGYPVVENGKLVGCIGIGNIHKKEGTVRDYMEKPVVVSEDTDIKEILRKMANTDRVFVVEGGKLKGIISKTDILRAMSILELKEELKD.

A run of 2 helical transmembrane segments spans residues 10–30 and 33–53; these read IMGIPIELHITFILFLVVIIG and IMNNSIFWAVLFILLFVSVVL. His54 provides a ligand contact to Zn(2+). Glu55 is an active-site residue. Zn(2+) is bound at residue His58. A run of 2 helical transmembrane segments spans residues 96-116 and 125-145; these read IAGPLVSFIIGIVLLIVSQFF and LLYTLSLLNLMLGGFNLIPAF. Asp148 is a Zn(2+) binding site. Helical transmembrane passes span 180–200 and 251–271; these read IMLLFGLLSMNIILILVSLFV and YFGYPVVENGKLVGCIGIGNI. 2 CBS domains span residues 226-281 and 281-335; these read MTPN…VRDY and YMEK…ELKE.

The protein belongs to the peptidase M50B family. As to quaternary structure, monomer. The cofactor is Zn(2+).

It localises to the cell membrane. Inhibited by 1,10-phenanthroline. Its function is as follows. A site-2 regulated intramembrane protease (S2P) that cleaves type-2 transmembrane proteins within their membrane-spanning domains; its endogenous substrate is unknown. Regulated intramembrane proteolysis (RIP) occurs when an extracytoplasmic signal triggers a concerted proteolytic cascade to transmit information and elicit cellular responses. A membrane-spanning regulatory substrate protein is first cut extracytoplasmically (site-1 protease, S1P), then within the membrane itself (site-2 protease, S2P, this enzyme), while cytoplasmic proteases finish degrading the regulatory protein, liberating the effector protein. Possible signals, S1P and substrates are unknown in this organism. The sequence is that of Zinc metalloprotease MJ0392 from Methanocaldococcus jannaschii (strain ATCC 43067 / DSM 2661 / JAL-1 / JCM 10045 / NBRC 100440) (Methanococcus jannaschii).